Consider the following 583-residue polypeptide: Isocitrate dehydrogenase kinase/phosphatase (583 aa).

ATP-binding positions include 315 to 321 (APGIRGM) and Lys-336. The active site involves Asp-371.

The protein belongs to the AceK family.

It localises to the cytoplasm. It carries out the reaction L-seryl-[isocitrate dehydrogenase] + ATP = O-phospho-L-seryl-[isocitrate dehydrogenase] + ADP + H(+). Bifunctional enzyme which can phosphorylate or dephosphorylate isocitrate dehydrogenase (IDH) on a specific serine residue. This is a regulatory mechanism which enables bacteria to bypass the Krebs cycle via the glyoxylate shunt in response to the source of carbon. When bacteria are grown on glucose, IDH is fully active and unphosphorylated, but when grown on acetate or ethanol, the activity of IDH declines drastically concomitant with its phosphorylation. The chain is Isocitrate dehydrogenase kinase/phosphatase from Salmonella paratyphi B (strain ATCC BAA-1250 / SPB7).